Consider the following 302-residue polypeptide: Ubiquinone biosynthesis protein COQ4, mitochondrial (302 aa).

The transit peptide at 1–19 (MNSSPARAVRALVQSQSRQ) directs the protein to the mitochondrion. H176, D177, H180, and E192 together coordinate Zn(2+). Residues 268 to 282 (PPPDMRDARKRERDA) are compositionally biased toward basic and acidic residues. A disordered region spans residues 268-302 (PPPDMRDARKRERDARRRRKQLETEAQQGLDAASL).

This sequence belongs to the COQ4 family. As to quaternary structure, component of a multi-subunit COQ enzyme complex, composed of at least COQ3, COQ4, COQ5, COQ6, COQ7 and COQ9. Zn(2+) is required as a cofactor.

It localises to the mitochondrion inner membrane. The catalysed reaction is a 4-hydroxy-3-methoxy-5-(all-trans-polyprenyl)benzoate + H(+) = a 2-methoxy-6-(all-trans-polyprenyl)phenol + CO2. It functions in the pathway cofactor biosynthesis; ubiquinone biosynthesis. Its function is as follows. Lyase that catalyzes the C1-decarboxylation of 4-hydroxy-3-methoxy-5-(all-trans-polyprenyl)benzoic acid into 2-methoxy-6-(all-trans-polyprenyl)phenol during ubiquinone biosynthesis. The chain is Ubiquinone biosynthesis protein COQ4, mitochondrial from Pyricularia oryzae (strain 70-15 / ATCC MYA-4617 / FGSC 8958) (Rice blast fungus).